Consider the following 487-residue polypeptide: MTTAAIIGGGVIGGGWAARFLLNGWDVRVFDPDPEAERKIGEVLANARRSLPGLSDMPLPPEGKLSFHADLGEAVTGAAWIQESVPERLDLKLKVYRSIQEACDPGAILGSSTSGFKPSELQEGALRPGQIVVTHPFNPVYLLPLIELVTTPENSPEMIERAKEIMRGLGQFPLHVRKEIDAHIADRFLEAVWREALWLVKDGIATTEEIDEAIRMGFGIRWAQMGLFETYRVAGGEAGMKHFMAQFGPCLSWPWTKLMDVPEFTDELVDLIAGQSDAQSGHHTIRELERIRDNNLVGMMRALKAQNWGAGAVLNKHDAALKPKALPDLDTADLTQPILTLSRAVPLDWTDYNGHMTESKYLEAFANSTDRFMEIIGCDADYIAAGGSYFTAETHIRHLDEAHAGARIRVETQMLLGQGKKLHLFHRMYEGDKLLATGESFLLHVSLETRKPCAPSPEIEAAMARIAEAQAGLSYPEGAGSAIRKPA.

The segment at 1–327 (MTTAAIIGGG…DAALKPKALP (327 aa)) is L-carnitine dehydrogenase. 8 to 13 (GGGVIG) serves as a coordination point for NAD(+). Residues 328 to 487 (DLDTADLTQP…GAGSAIRKPA (160 aa)) form a betainyl-CoA thioesterase region.

The protein in the N-terminal section; belongs to the 3-hydroxyacyl-CoA dehydrogenase family. L-carnitine dehydrogenase subfamily. This sequence in the C-terminal section; belongs to the betainyl-CoA thioesterase family. In terms of assembly, homodimer.

Its subcellular location is the cytoplasm. It catalyses the reaction carnitine + NAD(+) = 3-dehydrocarnitine + NADH + H(+). The catalysed reaction is N,N,N-trimethylglycyl-CoA + H2O = glycine betaine + CoA + H(+). The protein operates within amine and polyamine metabolism; carnitine metabolism. Functionally, multifunctional enzyme that catalyzes the NAD(+)-dependent oxidation of L-carnitine to 3-dehydrocarnitine and the cleavage of betainyl-CoA (N,N,N-trimethylglycyl-CoA) into glycine betaine and coenzyme A. This is L-carnitine dehydrogenase/betainyl-CoA thioesterase from Ruegeria pomeroyi (strain ATCC 700808 / DSM 15171 / DSS-3) (Silicibacter pomeroyi).